Reading from the N-terminus, the 309-residue chain is Oxygen-dependent coproporphyrinogen-III oxidase (309 aa).

Ser100 provides a ligand contact to substrate. His104 and His114 together coordinate a divalent metal cation. His114 serves as the catalytic Proton donor. Substrate is bound at residue 116–118 (NVR). A divalent metal cation-binding residues include His153 and His183. The interval 248–283 (YAEFNLVYDRGTLFGLQSGGRTESILMSLPPIVHWE) is important for dimerization. Substrate is bound at residue 266 to 268 (GGR).

Belongs to the aerobic coproporphyrinogen-III oxidase family. In terms of assembly, homodimer. A divalent metal cation serves as cofactor.

It localises to the cytoplasm. The catalysed reaction is coproporphyrinogen III + O2 + 2 H(+) = protoporphyrinogen IX + 2 CO2 + 2 H2O. Its pathway is porphyrin-containing compound metabolism; protoporphyrin-IX biosynthesis; protoporphyrinogen-IX from coproporphyrinogen-III (O2 route): step 1/1. Functionally, involved in the heme biosynthesis. Catalyzes the aerobic oxidative decarboxylation of propionate groups of rings A and B of coproporphyrinogen-III to yield the vinyl groups in protoporphyrinogen-IX. This chain is Oxygen-dependent coproporphyrinogen-III oxidase, found in Legionella pneumophila (strain Lens).